The primary structure comprises 972 residues: Protein NRDE2 homolog (972 aa).

The span at 1–17 shows a compositional bias: polar residues; sequence MPSNHNTSVPKFSSFNS. A disordered region spans residues 1-61; the sequence is MPSNHNTSVP…RSIQSNFAVD (61 aa). A compositionally biased stretch (basic residues) spans 19–33; it reads KAKKNPITKSNKKYR. Over residues 37–59 the composition is skewed to polar residues; that stretch reads DQVSSNHAKSSFPSHRSIQSNFA. HAT repeat units follow at residues 159–191, 250–282, 318–350, 355–386, 608–640, 788–820, and 860–894; these read LNIL…YQER, WSKE…YFTG, TDVT…YELA, QANM…FWNS, EEKP…LEHL, YNLP…FESK, and TNSQ…ILNL. Position 970 is a phosphoserine (S970).

It belongs to the NRDE2 family.

The protein resides in the nucleus. The sequence is that of Protein NRDE2 homolog from Schizosaccharomyces pombe (strain 972 / ATCC 24843) (Fission yeast).